A 1007-amino-acid chain; its full sequence is Serine/threonine-protein kinase PRP4 homolog (1007 aa).

Residues 1-10 (MAAAETQSLR) are compositionally biased toward polar residues. Positions 1-99 (MAAAETQSLR…EGMSPAKRTK (99 aa)) are disordered. A2 bears the N-acetylalanine mark. Phosphoserine occurs at positions 8, 20, 23, and 32. Composition is skewed to basic residues over residues 39-59 (KHSRHKKKKHKHRSKHKKHKH) and 67-81 (KKHKHKHKHKKHKRK). Over residues 82–91 (EVIDASDKEG) the composition is skewed to basic and acidic residues. A phosphoserine mark is found at S87 and S93. K99 carries the post-translational modification N6-acetyllysine; alternate. Residue K99 forms a Glycyl lysine isopeptide (Lys-Gly) (interchain with G-Cter in SUMO2); alternate linkage. Residue K111 forms a Glycyl lysine isopeptide (Lys-Gly) (interchain with G-Cter in SUMO2) linkage. K117 participates in a covalent cross-link: Glycyl lysine isopeptide (Lys-Gly) (interchain with G-Cter in SUMO2); alternate. K117 is covalently cross-linked (Glycyl lysine isopeptide (Lys-Gly) (interchain with G-Cter in SUMO1); alternate). S131 is modified (phosphoserine). The residue at position 140 (Y140) is a Phosphotyrosine. Disordered regions lie at residues 140-533 (YESG…EEED) and 559-583 (SNMSVPSEPSSPQSSTRTRSPSPDD). Residues S142, S144, and S166 each carry the phosphoserine modification. The span at 157–168 (GNRSSTRSSSTK) shows a compositional bias: low complexity. Glycyl lysine isopeptide (Lys-Gly) (interchain with G-Cter in SUMO2) cross-links involve residues K170 and K177. 2 stretches are compositionally biased toward basic residues: residues 179–202 (TTKKRSKSRSKERTRHRSDKKKSK) and 214–230 (RSKSKERKKSKSPSKRS). A phosphoserine mark is found at S239, S241, S257, S277, S283, S292, and S294. The segment covering 247–270 (RSQEKIGKARSPTDDKVKIEDKSK) has biased composition (basic and acidic residues). Residues 302-315 (SKDRRSRSKERKSK) show a composition bias toward basic residues. A compositionally biased stretch (basic and acidic residues) spans 316-325 (RSETDKEKKP). Phosphoserine is present on residues S328, S354, S356, S366, and S368. A compositionally biased stretch (basic residues) spans 342-367 (PSRRPGRSPKRRSLSPKPRDKSRRSR). Position 385 is a phosphothreonine (T385). S387 is modified (phosphoserine). Composition is skewed to basic and acidic residues over residues 395–408 (RSLERKRREPERRR) and 415–429 (RPRDDILSRRERSKD). Phosphoserine is present on residues S427, S431, and S437. Positions 438–497 (PTRRRSRSPIRRRSRSPLRRSRSPRRRSRSPRRRDRGRRSRSRLRRRSRSRGGRRRRSRS) are enriched in basic residues. Phosphoserine is present on residues S518, S519, S520, S565, S569, S578, and S580. Over residues 518–533 (SSSDDNLEDFDVEEED) the composition is skewed to acidic residues. A compositionally biased stretch (low complexity) spans 562–581 (SVPSEPSSPQSSTRTRSPSP). Residues K593 and K659 each participate in a glycyl lysine isopeptide (Lys-Gly) (interchain with G-Cter in SUMO2) cross-link. In terms of domain architecture, Protein kinase spans 687-1003 (YNVYGYTGQG…INQALQHAFI (317 aa)). ATP contacts are provided by residues 693 to 701 (TGQGVFSNV) and K717. An N6-acetyllysine modification is found at K717. Catalysis depends on D815, which acts as the Proton acceptor. A Phosphotyrosine modification is found at Y849. Position 852 is a phosphoserine (S852).

The protein belongs to the protein kinase superfamily. CMGC Ser/Thr protein kinase family. As to quaternary structure, interacts with CLK1 C-terminus. Associates with the U5 snRNP and NCOR1 deacetylase complexes. Identified in the spliceosome C complex. In terms of processing, phosphorylated by CLK1. Autophosphorylated; phosphorylation inhibits interaction with its targets, such as PRPF6 or SMARCA4.

The protein localises to the nucleus. Its subcellular location is the chromosome. The protein resides in the centromere. It is found in the kinetochore. The enzyme catalyses L-seryl-[protein] + ATP = O-phospho-L-seryl-[protein] + ADP + H(+). It catalyses the reaction L-threonyl-[protein] + ATP = O-phospho-L-threonyl-[protein] + ADP + H(+). Functionally, serine/threonine kinase involved in spliceosomal assembly as well as mitosis and signaling regulation. Connects chromatin mediated regulation of transcription and pre-mRNA splicing. During spliceosomal assembly, interacts with and phosphorylates PRPF6 and PRPF31, components of the U4/U6-U5 tri-small nuclear ribonucleoprotein (snRNP), to facilitate the formation of the spliceosome B complex. Plays a role in regulating transcription and the spindle assembly checkpoint (SAC). Associates with U5 snRNP and NCOR1 deacetylase complexes which may allow a coordination of pre-mRNA splicing with chromatin remodeling events involved in transcriptional regulation. Associates and probably phosphorylates SMARCA4 and NCOR1. Phosphorylates SRSF1. Associates with kinetochores during mitosis and is necessary for recruitment and maintenance of the checkpoint proteins such as MAD1L1 and MAD12L1 at the kinetochores. Phosphorylates and regulates the activity of the transcription factors such as ELK1 and KLF13. Phosphorylates nuclear YAP1 and WWTR1/TAZ which induces nuclear exclusion and regulates Hippo signaling pathway, involved in tissue growth control. The polypeptide is Serine/threonine-protein kinase PRP4 homolog (PRP4K) (Pongo abelii (Sumatran orangutan)).